Reading from the N-terminus, the 88-residue chain is Large ribosomal subunit protein bL31B (88 aa).

The protein belongs to the bacterial ribosomal protein bL31 family. Type B subfamily. In terms of assembly, part of the 50S ribosomal subunit.

In Bordetella pertussis (strain Tohama I / ATCC BAA-589 / NCTC 13251), this protein is Large ribosomal subunit protein bL31B.